The chain runs to 1002 residues: ATP-dependent DNA helicase MPH1 (1002 aa).

The Helicase ATP-binding domain maps to 108–275; that stretch reads IVRCALFENV…EVVNNLHISK (168 aa). Position 121-128 (121-128) interacts with ATP; sequence IPTGTGKT. The DEAH box motif lies at 223–226; it reads DEAH. One can recognise a Helicase C-terminal domain in the interval 506–669; it reads DEETYIRKNK…ALEYTKSDRI (164 aa). Residues 531–551 are compositionally biased toward basic and acidic residues; the sequence is ENRVEEEKKRQKEQAKLERTG. Disordered regions lie at residues 531–569 and 799–843; these read ENRVEEEKKRQKEQAKLERTGRRTGSSEEAQLSGMNQKQ and AKSQ…DSHT. The segment covering 553 to 568 has biased composition (polar residues); sequence RTGSSEEAQLSGMNQK.

This sequence belongs to the DEAD box helicase family. DEAH subfamily. FANCM sub-subfamily. In terms of assembly, interacts with the MHF histone-fold complex to form the FANCM-MHF complex.

It localises to the nucleus. The catalysed reaction is ATP + H2O = ADP + phosphate + H(+). In terms of biological role, ATP-dependent DNA helicase involved in DNA damage repair by homologous recombination and in genome maintenance. Capable of unwinding D-loops. Plays a role in limiting crossover recombinants during mitotic DNA double-strand break (DSB) repair. Component of a FANCM-MHF complex which promotes gene conversion at blocked replication forks, probably by reversal of the stalled fork. The polypeptide is ATP-dependent DNA helicase MPH1 (Kluyveromyces lactis (strain ATCC 8585 / CBS 2359 / DSM 70799 / NBRC 1267 / NRRL Y-1140 / WM37) (Yeast)).